The chain runs to 396 residues: L-lactate dehydrogenase (396 aa).

Residues 1–380 (MIISAASDYR…SGDSLVQELG (380 aa)) enclose the FMN hydroxy acid dehydrogenase domain. Residue Y24 coordinates substrate. 2 residues coordinate FMN: S106 and Q127. Y129 is a binding site for substrate. T155 is a binding site for FMN. Substrate is bound at residue R164. K251 contacts FMN. H275 serves as the catalytic Proton acceptor. R278 provides a ligand contact to substrate. Residue 306–330 (DSGIRNGLDVVRMIALGADTVLLGR) participates in FMN binding.

Belongs to the FMN-dependent alpha-hydroxy acid dehydrogenase family. Requires FMN as cofactor.

It localises to the cell inner membrane. The catalysed reaction is (S)-lactate + A = pyruvate + AH2. In terms of biological role, catalyzes the conversion of L-lactate to pyruvate. Is coupled to the respiratory chain. This is L-lactate dehydrogenase from Salmonella paratyphi B (strain ATCC BAA-1250 / SPB7).